The sequence spans 140 residues: MAKKEVAKIKLQIPAGAANPSPPVGPALGQHGLNIMEFCKTFNAKTMEQKGMITPVVITVYSDRSFTFITKTPPASVLLLKAAKLEKGSGEPNRNKVGSVSMAQVEEIAKLKLPDLTAKDLDAATRSVLGTARSMGIEIK.

Belongs to the universal ribosomal protein uL11 family. In terms of assembly, part of the ribosomal stalk of the 50S ribosomal subunit. Interacts with L10 and the large rRNA to form the base of the stalk. L10 forms an elongated spine to which L12 dimers bind in a sequential fashion forming a multimeric L10(L12)X complex. One or more lysine residues are methylated.

In terms of biological role, forms part of the ribosomal stalk which helps the ribosome interact with GTP-bound translation factors. The chain is Large ribosomal subunit protein uL11 from Nitratidesulfovibrio vulgaris (strain DSM 19637 / Miyazaki F) (Desulfovibrio vulgaris).